The sequence spans 91 residues: Acylphosphatase (91 aa).

An Acylphosphatase-like domain is found at 4-91; the sequence is RAIVTIKGLV…GEFDDFDVRY (88 aa). Catalysis depends on residues Arg-19 and Asn-37.

The protein belongs to the acylphosphatase family.

It carries out the reaction an acyl phosphate + H2O = a carboxylate + phosphate + H(+). This is Acylphosphatase (acyP) from Geobacter sulfurreducens (strain ATCC 51573 / DSM 12127 / PCA).